The chain runs to 502 residues: Cytochrome c-552 (502 aa).

Residues 1–25 form the signal peptide; that stretch reads MKYLTKSRVIATIAMLGCLSVSAWA. Heme c is bound at residue His105. Residues Cys133, Cys136, and Lys137 each contribute to the heme site. The heme c site is built by Cys171, Cys174, His175, Cys220, Cys223, and His224. The Ca(2+) site is built by Glu226, Tyr227, Lys271, and Gln273. Tyr227 is a binding site for substrate. His274 contributes to the substrate binding site. 9 residues coordinate heme c: His285, Cys292, Cys295, His296, His311, Cys324, Cys327, His328, and His403. Positions 481–502 are disordered; the sequence is RERGLLPEVTPKSVTTPKVDAK.

Belongs to the cytochrome c-552 family. It depends on Ca(2+) as a cofactor. The cofactor is heme c.

It localises to the periplasm. The enzyme catalyses 6 Fe(III)-[cytochrome c] + NH4(+) + 2 H2O = 6 Fe(II)-[cytochrome c] + nitrite + 8 H(+). It participates in nitrogen metabolism; nitrate reduction (assimilation). Its function is as follows. Catalyzes the reduction of nitrite to ammonia, consuming six electrons in the process. This Haemophilus ducreyi (strain 35000HP / ATCC 700724) protein is Cytochrome c-552.